The sequence spans 1024 residues: Multidrug resistance protein MdtC (1024 aa).

Helical transmembrane passes span 3-23 (FLSL…ALVL), 333-353 (EVEQ…FAFL), 360-380 (LIPA…MYLC), 387-407 (LSLM…IVVL), 431-451 (VGFT…PLLM), 463-483 (FAIT…TLTP), 528-548 (WALL…ISMP), 853-873 (LWLI…LYES), 875-895 (VHPL…LLAL), 897-917 (LFNT…IGIV), 953-973 (PIIM…LSSG), and 984-1004 (ITIV…TPVV).

Belongs to the resistance-nodulation-cell division (RND) (TC 2.A.6) family. MdtC subfamily. As to quaternary structure, part of a tripartite efflux system composed of MdtA, MdtB and MdtC. MdtC forms a heteromultimer with MdtB.

It localises to the cell inner membrane. The sequence is that of Multidrug resistance protein MdtC from Erwinia amylovora (strain ATCC 49946 / CCPPB 0273 / Ea273 / 27-3).